The following is a 409-amino-acid chain: Peptidase T (409 aa).

His-78 serves as a coordination point for Zn(2+). Residue Asp-80 is part of the active site. Asp-139 lines the Zn(2+) pocket. Catalysis depends on Glu-173, which acts as the Proton acceptor. Zn(2+)-binding residues include Glu-174, Asp-196, and His-378.

Belongs to the peptidase M20B family. The cofactor is Zn(2+).

The protein resides in the cytoplasm. The catalysed reaction is Release of the N-terminal residue from a tripeptide.. Its function is as follows. Cleaves the N-terminal amino acid of tripeptides. The protein is Peptidase T of Shewanella sediminis (strain HAW-EB3).